A 200-amino-acid polypeptide reads, in one-letter code: Small ribosomal subunit protein uS4 (200 aa).

Positions 92–155 (SRLDAVVYSL…QNLDIIKESV (64 aa)) constitute an S4 RNA-binding domain.

Belongs to the universal ribosomal protein uS4 family. Part of the 30S ribosomal subunit. Contacts protein S5. The interaction surface between S4 and S5 is involved in control of translational fidelity.

Functionally, one of the primary rRNA binding proteins, it binds directly to 16S rRNA where it nucleates assembly of the body of the 30S subunit. With S5 and S12 plays an important role in translational accuracy. The sequence is that of Small ribosomal subunit protein uS4 from Staphylococcus haemolyticus (strain JCSC1435).